A 3141-amino-acid chain; its full sequence is Genome polyprotein (3141 aa).

Residues 165-308 form the Peptidase S30 domain; the sequence is RMSEASLQLF…KKQSNEIIHY (144 aa). Catalysis depends on for P1 proteinase activity residues histidine 216, aspartate 225, and serine 259. Positions 360–363 match the Involved in interaction with stylet and aphid transmission motif; it reads KITC. Residues 619–621 carry the Involved in virions binding and aphid transmission motif; the sequence is PTK. The region spanning 645-767 is the Peptidase C6 domain; sequence MFIAKAGYCY…DSNMKTYLVG (123 aa). Residues cysteine 653 and histidine 726 each act as for helper component proteinase activity in the active site. In terms of domain architecture, Helicase ATP-binding spans 1241–1393; it reads EVMHGSHQDI…TQKEVKVIVE (153 aa). Residue 1254-1261 coordinates ATP; that stretch reads GAVGSGKS. The short motif at 1343 to 1346 is the DECH box element; that stretch reads DECH. The Helicase C-terminal domain occupies 1412–1571; sequence DILKHGVNVL…GLPVMTNGVS (160 aa). The Nuclear localization signal signature appears at 1898 to 1905; the sequence is KKGKSKGK. Tyrosine 1920 carries the post-translational modification O-(5'-phospho-RNA)-tyrosine. A Peptidase C4 domain is found at 2051-2269; the sequence is SKSLFRGLRD…VCWGSLQLKR (219 aa). Catalysis depends on for nuclear inclusion protein A activity residues histidine 2096, aspartate 2131, and cysteine 2201. Residues 2535 to 2659 form the RdRp catalytic domain; the sequence is WIYCDADGSQ…AVHPAYESIY (125 aa). Serine 2836, serine 2892, serine 2912, and serine 2929 each carry phosphoserine. Phosphothreonine occurs at positions 3065 and 3124.

The protein belongs to the potyviridae genome polyprotein family. As to quaternary structure, interacts with host eIF4E protein (via cap-binding region); this interaction mediates the translation of the VPg-viral RNA conjugates. Part of a complex that comprises VPg, RNA, host EIF4E and EIF4G; this interaction mediates the translation of the VPg-viral RNA conjugates. Interacts with host eIF(iso)4E both in host nucleus and cytoplasm. Post-translationally, VPg is uridylylated by the polymerase and is covalently attached to the 5'-end of the genomic RNA. This uridylylated form acts as a nucleotide-peptide primer for the polymerase. In terms of processing, potyviral RNA is expressed as two polyproteins which undergo post-translational proteolytic processing. Genome polyprotein is processed by NIa-pro, P1 and HC-pro proteinases resulting in the production of at least ten individual proteins. P3N-PIPO polyprotein is cleaved by P1 and HC-pro proteinases resulting in the production of three individual proteins. The P1 proteinase and the HC-pro cleave only their respective C-termini autocatalytically. 6K1 is essential for proper proteolytic separation of P3 from CI.

The protein localises to the host cytoplasmic vesicle. The protein resides in the host nucleus. It localises to the host cytoplasm. It is found in the virion. It carries out the reaction RNA(n) + a ribonucleoside 5'-triphosphate = RNA(n+1) + diphosphate. The catalysed reaction is Hydrolyzes glutaminyl bonds, and activity is further restricted by preferences for the amino acids in P6 - P1' that vary with the species of potyvirus, e.g. Glu-Xaa-Xaa-Tyr-Xaa-Gln-|-(Ser or Gly) for the enzyme from tobacco etch virus. The natural substrate is the viral polyprotein, but other proteins and oligopeptides containing the appropriate consensus sequence are also cleaved.. The enzyme catalyses Hydrolyzes a Gly-|-Gly bond at its own C-terminus, commonly in the sequence -Tyr-Xaa-Val-Gly-|-Gly, in the processing of the potyviral polyprotein.. In terms of biological role, required for aphid transmission and also has proteolytic activity. Only cleaves a Gly-Gly dipeptide at its own C-terminus. Interacts with virions and aphid stylets. Acts as a suppressor of RNA-mediated gene silencing, also known as post-transcriptional gene silencing (PTGS), a mechanism of plant viral defense that limits the accumulation of viral RNAs. May have RNA-binding activity. Functionally, has helicase activity. It may be involved in replication. Its function is as follows. Indispensable for virus replication. Reduces the abundance of host transcripts related to jasmonic acid biosynthesis therefore altering the host defenses. In order to increase its own stability, decreases host protein degradation pathways. Indispensable for virus replication. In terms of biological role, mediates the cap-independent, EIF4E-dependent translation of viral genomic RNAs. Binds to the cap-binding site of host EIF4E and thus interferes with the host EIF4E-dependent mRNA export and translation. VPg-RNA directly binds EIF4E and is a template for transcription. Also forms trimeric complexes with EIF4E-EIF4G, which are templates for translation. Functionally, has RNA-binding and proteolytic activities. Its function is as follows. An RNA-dependent RNA polymerase that plays an essential role in the virus replication. Involved in aphid transmission, cell-to-cell and systemis movement, encapsidation of the viral RNA and in the regulation of viral RNA amplification. The polypeptide is Genome polyprotein (Plum pox potyvirus (strain D) (PPV)).